The following is a 545-amino-acid chain: Chaperonin GroEL 2 (545 aa).

ATP is bound by residues 29–32 (TLGP), 86–90 (DGTTT), Gly413, 479–481 (NAA), and Asp495.

Belongs to the chaperonin (HSP60) family. As to quaternary structure, forms a cylinder of 14 subunits composed of two heptameric rings stacked back-to-back. Interacts with the co-chaperonin GroES.

The protein localises to the cytoplasm. It catalyses the reaction ATP + H2O + a folded polypeptide = ADP + phosphate + an unfolded polypeptide.. Its function is as follows. Together with its co-chaperonin GroES, plays an essential role in assisting protein folding. The GroEL-GroES system forms a nano-cage that allows encapsulation of the non-native substrate proteins and provides a physical environment optimized to promote and accelerate protein folding. This is Chaperonin GroEL 2 from Prochlorococcus marinus (strain MIT 9215).